The sequence spans 329 residues: Malate dehydrogenase (329 aa).

Position 13–19 (13–19 (GAAGNIS)) interacts with NAD(+). Positions 94 and 100 each coordinate substrate. Residues Asn-107, Gln-114, and 131–133 (VGN) each bind NAD(+). Substrate-binding residues include Asn-133 and Arg-164. His-189 acts as the Proton acceptor in catalysis.

It belongs to the LDH/MDH superfamily. MDH type 2 family.

The enzyme catalyses (S)-malate + NAD(+) = oxaloacetate + NADH + H(+). Functionally, catalyzes the reversible oxidation of malate to oxaloacetate. This chain is Malate dehydrogenase, found in Psychrobacter arcticus (strain DSM 17307 / VKM B-2377 / 273-4).